Reading from the N-terminus, the 692-residue chain is Hexamerin-1.1 (692 aa).

A signal peptide spans 1 to 18 (MKLLILAVAISLAVLASG). N-linked (GlcNAc...) asparagine glycosylation is present at Asn-203.

Belongs to the hemocyanin family. In terms of assembly, homohexamer. As to expression, larval fat body.

The protein resides in the secreted. It localises to the extracellular space. Functionally, larval storage protein (LSP) which may serve as a store of amino acids for synthesis of adult proteins. This Anopheles gambiae (African malaria mosquito) protein is Hexamerin-1.1 (HexA).